Reading from the N-terminus, the 203-residue chain is ATP-dependent Clp protease proteolytic subunit 1 (203 aa).

The active-site Nucleophile is serine 101. Histidine 126 is a catalytic residue.

Belongs to the peptidase S14 family. As to quaternary structure, fourteen ClpP subunits assemble into 2 heptameric rings which stack back to back to give a disk-like structure with a central cavity, resembling the structure of eukaryotic proteasomes.

It is found in the cytoplasm. It catalyses the reaction Hydrolysis of proteins to small peptides in the presence of ATP and magnesium. alpha-casein is the usual test substrate. In the absence of ATP, only oligopeptides shorter than five residues are hydrolyzed (such as succinyl-Leu-Tyr-|-NHMec, and Leu-Tyr-Leu-|-Tyr-Trp, in which cleavage of the -Tyr-|-Leu- and -Tyr-|-Trp bonds also occurs).. Functionally, cleaves peptides in various proteins in a process that requires ATP hydrolysis. Has a chymotrypsin-like activity. Plays a major role in the degradation of misfolded proteins. This is ATP-dependent Clp protease proteolytic subunit 1 from Synechococcus sp. (strain JA-3-3Ab) (Cyanobacteria bacterium Yellowstone A-Prime).